The primary structure comprises 1407 residues: Probable phosphoribosylformylglycinamidine synthase, chloroplastic/mitochondrial (1407 aa).

A chloroplast and mitochondrion-targeting transit peptide spans 1 to 53; that stretch reads MNTSQATRAALFLNGSNRQAMLLQRSSMSQLWGSVRMRTSRLSLNRTKAVSLR. ATP contacts are provided by residues 407–418, 487–489, and alanine 786; these read GAETGAGGRIRD and QGY. The Mg(2+) site is built by aspartate 787, glutamate 826, asparagine 830, and aspartate 989. Residue serine 991 coordinates ATP. The Glutamine amidotransferase type-1 domain maps to 1141–1381; the sequence is KVAVIREEGS…LMWQFPWYPT (241 aa). Cysteine 1235 functions as the Nucleophile in the catalytic mechanism. Catalysis depends on residues histidine 1366 and glutamate 1368.

This sequence in the N-terminal section; belongs to the FGAMS family.

Its subcellular location is the plastid. It localises to the chloroplast. It is found in the mitochondrion. It carries out the reaction N(2)-formyl-N(1)-(5-phospho-beta-D-ribosyl)glycinamide + L-glutamine + ATP + H2O = 2-formamido-N(1)-(5-O-phospho-beta-D-ribosyl)acetamidine + L-glutamate + ADP + phosphate + H(+). Its pathway is purine metabolism; IMP biosynthesis via de novo pathway; 5-amino-1-(5-phospho-D-ribosyl)imidazole from N(2)-formyl-N(1)-(5-phospho-D-ribosyl)glycinamide: step 1/2. In terms of biological role, essential to the male gametophyte development. Phosphoribosylformylglycinamidine synthase involved in the purines biosynthetic pathway. Catalyzes the ATP-dependent conversion of formylglycinamide ribonucleotide (FGAR) and glutamine to yield formylglycinamidine ribonucleotide (FGAM) and glutamate. The protein is Probable phosphoribosylformylglycinamidine synthase, chloroplastic/mitochondrial of Arabidopsis thaliana (Mouse-ear cress).